The following is a 249-amino-acid chain: Flavodoxin/ferredoxin--NADP reductase (249 aa).

In terms of domain architecture, FAD-binding FR-type spans 2 to 102 (NTWITAKIIK…KKSYGFFTLN (101 aa)). Residues 51–54 (RAYS), tyrosine 67, 75–77 (QLT), and threonine 117 each bind FAD. NADP(+) contacts are provided by residues 144–145 (VR), 174–175 (SR), arginine 185, and 215–217 (NPD). 248-249 (YW) lines the FAD pocket.

Belongs to the ferredoxin--NADP reductase type 1 family. FAD is required as a cofactor.

Its subcellular location is the cytoplasm. The enzyme catalyses 2 reduced [2Fe-2S]-[ferredoxin] + NADP(+) + H(+) = 2 oxidized [2Fe-2S]-[ferredoxin] + NADPH. The catalysed reaction is reduced [flavodoxin] + NADP(+) = oxidized [flavodoxin] + NADPH + 2 H(+). Functionally, transports electrons between flavodoxin or ferredoxin and NADPH. In Buchnera aphidicola subsp. Baizongia pistaciae (strain Bp), this protein is Flavodoxin/ferredoxin--NADP reductase (fpr).